We begin with the raw amino-acid sequence, 320 residues long: o-succinylbenzoate synthase (320 aa).

K133 acts as the Proton donor in catalysis. Residues D161, E190, and D213 each coordinate Mg(2+). Residue K235 is the Proton acceptor of the active site.

Belongs to the mandelate racemase/muconate lactonizing enzyme family. MenC type 1 subfamily. Requires a divalent metal cation as cofactor.

The enzyme catalyses (1R,6R)-6-hydroxy-2-succinyl-cyclohexa-2,4-diene-1-carboxylate = 2-succinylbenzoate + H2O. It participates in quinol/quinone metabolism; 1,4-dihydroxy-2-naphthoate biosynthesis; 1,4-dihydroxy-2-naphthoate from chorismate: step 4/7. It functions in the pathway quinol/quinone metabolism; menaquinone biosynthesis. Functionally, converts 2-succinyl-6-hydroxy-2,4-cyclohexadiene-1-carboxylate (SHCHC) to 2-succinylbenzoate (OSB). This chain is o-succinylbenzoate synthase, found in Escherichia coli O6:K15:H31 (strain 536 / UPEC).